We begin with the raw amino-acid sequence, 296 residues long: Protoheme IX farnesyltransferase 2 (296 aa).

A run of 9 helical transmembrane segments spans residues 7–27, 36–56, 83–103, 108–128, 134–154, 163–183, 207–227, 229–249, and 265–285; these read LLVA…GGYF, PMLL…GCVL, LKAA…LLWW, LTTA…SLWF, YGTL…YCAV, ASLL…IAIF, IHIV…CLGG, AGYG…AIAL, and FAFS…DFQV.

The protein belongs to the UbiA prenyltransferase family. Protoheme IX farnesyltransferase subfamily.

Its subcellular location is the cell inner membrane. It catalyses the reaction heme b + (2E,6E)-farnesyl diphosphate + H2O = Fe(II)-heme o + diphosphate. Its pathway is porphyrin-containing compound metabolism; heme O biosynthesis; heme O from protoheme: step 1/1. Its function is as follows. Converts heme B (protoheme IX) to heme O by substitution of the vinyl group on carbon 2 of heme B porphyrin ring with a hydroxyethyl farnesyl side group. The chain is Protoheme IX farnesyltransferase 2 from Pseudomonas paraeruginosa (strain DSM 24068 / PA7) (Pseudomonas aeruginosa (strain PA7)).